Here is a 209-residue protein sequence, read N- to C-terminus: Nascent polypeptide-associated complex subunit alpha-like protein 5 (209 aa).

The tract at residues 23–71 (EKEDDVVVEDVKDGEEEDDDEDDEDVEVEGEGGNENAKQSRSEKKSRKA) is disordered. The span at 25–54 (EDDVVVEDVKDGEEEDDDEDDEDVEVEGEG) shows a compositional bias: acidic residues. One can recognise an NAC-A/B domain in the interval 62–127 (SRSEKKSRKA…AKVDDLSSQL (66 aa)). Residues 170 to 207 (VEARDIDLVMTQAGVSKAKAVSALKANDGDIVSAIMEL) form the UBA domain.

The protein belongs to the NAC-alpha family.

May promote appropriate targeting of ribosome-nascent polypeptide complexes. The polypeptide is Nascent polypeptide-associated complex subunit alpha-like protein 5 (Arabidopsis thaliana (Mouse-ear cress)).